The following is a 219-amino-acid chain: Large ribosomal subunit protein bL25 (219 aa).

Positions 195–219 are disordered; sequence EETTTTETSNEPEVIKKGKKEEEEK. Over residues 197–206 the composition is skewed to low complexity; that stretch reads TTTTETSNEP. Residues 207 to 219 are compositionally biased toward basic and acidic residues; the sequence is EVIKKGKKEEEEK.

The protein belongs to the bacterial ribosomal protein bL25 family. CTC subfamily. As to quaternary structure, part of the 50S ribosomal subunit; part of the 5S rRNA/L5/L18/L25 subcomplex. Contacts the 5S rRNA. Binds to the 5S rRNA independently of L5 and L18.

Its function is as follows. This is one of the proteins that binds to the 5S RNA in the ribosome where it forms part of the central protuberance. This Fervidobacterium nodosum (strain ATCC 35602 / DSM 5306 / Rt17-B1) protein is Large ribosomal subunit protein bL25.